The sequence spans 328 residues: Tetraacyldisaccharide 4'-kinase (328 aa).

55-62 (TAGGNGKT) lines the ATP pocket.

It belongs to the LpxK family.

The catalysed reaction is a lipid A disaccharide + ATP = a lipid IVA + ADP + H(+). Its pathway is glycolipid biosynthesis; lipid IV(A) biosynthesis; lipid IV(A) from (3R)-3-hydroxytetradecanoyl-[acyl-carrier-protein] and UDP-N-acetyl-alpha-D-glucosamine: step 6/6. Its function is as follows. Transfers the gamma-phosphate of ATP to the 4'-position of a tetraacyldisaccharide 1-phosphate intermediate (termed DS-1-P) to form tetraacyldisaccharide 1,4'-bis-phosphate (lipid IVA). The sequence is that of Tetraacyldisaccharide 4'-kinase from Yersinia enterocolitica serotype O:8 / biotype 1B (strain NCTC 13174 / 8081).